We begin with the raw amino-acid sequence, 602 residues long: Lysine--tRNA ligase, chloroplastic/mitochondrial (602 aa).

Residues 50–62 show a composition bias toward low complexity; it reads SSSSSSATTAETS. The disordered stretch occupies residues 50–83; that stretch reads SSSSSSATTAETSKPSGRNRRSASSSNSTSDREA. Positions 136–214 form a DNA-binding region, OB; sequence VSIAGRVVAR…SICVNSFSIL (79 aa). Residues G285 and E309 each contribute to the substrate site. ATP is bound by residues 331 to 333 and 339 to 340; these read RNE and HN. Residues E347 and Y349 each contribute to the substrate site. Ca(2+)-binding residues include E492 and E499. Position 499–500 (499–500) interacts with ATP; sequence EM. Substrate is bound by residues N502 and E506. A compositionally biased stretch (basic and acidic residues) spans 524 to 543; the sequence is HNAKRAEAVRESPEPNAKKD. Positions 524–550 are disordered; sequence HNAKRAEAVRESPEPNAKKDDDDDESY. Residue 575–578 coordinates ATP; the sequence is GIDR.

This sequence belongs to the class-II aminoacyl-tRNA synthetase family. The cofactor is Ca(2+).

Its subcellular location is the plastid. It is found in the chloroplast. It localises to the mitochondrion. It carries out the reaction tRNA(Lys) + L-lysine + ATP = L-lysyl-tRNA(Lys) + AMP + diphosphate. Its function is as follows. Catalyzes the specific attachment of an amino acid to its cognate tRNA in a 2 step reaction: the amino acid (AA) is first activated by ATP to form AA-AMP and then transferred to the acceptor end of the tRNA. In Arabidopsis thaliana (Mouse-ear cress), this protein is Lysine--tRNA ligase, chloroplastic/mitochondrial.